The primary structure comprises 629 residues: tRNA uridine 5-carboxymethylaminomethyl modification enzyme MnmG (629 aa).

FAD is bound at residue 13-18; sequence GGGHAG. Residue 273-287 participates in NAD(+) binding; the sequence is GPRYCPSIEDKVNRF.

It belongs to the MnmG family. Homodimer. Heterotetramer of two MnmE and two MnmG subunits. It depends on FAD as a cofactor.

The protein localises to the cytoplasm. Its function is as follows. NAD-binding protein involved in the addition of a carboxymethylaminomethyl (cmnm) group at the wobble position (U34) of certain tRNAs, forming tRNA-cmnm(5)s(2)U34. The chain is tRNA uridine 5-carboxymethylaminomethyl modification enzyme MnmG from Shewanella pealeana (strain ATCC 700345 / ANG-SQ1).